The following is a 225-amino-acid chain: Methylthioribulose-1-phosphate dehydratase (225 aa).

2 residues coordinate Zn(2+): histidine 106 and histidine 108.

Belongs to the aldolase class II family. MtnB subfamily. It depends on Zn(2+) as a cofactor.

It carries out the reaction 5-(methylsulfanyl)-D-ribulose 1-phosphate = 5-methylsulfanyl-2,3-dioxopentyl phosphate + H2O. The protein operates within amino-acid biosynthesis; L-methionine biosynthesis via salvage pathway; L-methionine from S-methyl-5-thio-alpha-D-ribose 1-phosphate: step 2/6. Functionally, catalyzes the dehydration of methylthioribulose-1-phosphate (MTRu-1-P) into 2,3-diketo-5-methylthiopentyl-1-phosphate (DK-MTP-1-P). The chain is Methylthioribulose-1-phosphate dehydratase from Xanthomonas oryzae pv. oryzae (strain MAFF 311018).